Reading from the N-terminus, the 201-residue chain is Thioredoxin reductase-like selenoprotein T (201 aa).

The first 26 residues, Met1 to Ala26, serve as a signal peptide directing secretion. Positions Cys51–Sec54 form a cross-link, cysteinyl-selenocysteine (Cys-Sec). Sec54 is a non-standard amino acid (selenocysteine). The chain crosses the membrane as a helical span at residues Val96–Gly116.

This sequence belongs to the SelWTH family. Selenoprotein T subfamily. May contain a selenide-sulfide bond between Cys-51 and Sec-54. This bond is speculated to serve as redox-active pair.

The protein resides in the endoplasmic reticulum membrane. The catalysed reaction is [thioredoxin]-dithiol + NADP(+) = [thioredoxin]-disulfide + NADPH + H(+). Selenoprotein with thioredoxin reductase-like oxidoreductase activity. This Xenopus tropicalis (Western clawed frog) protein is Thioredoxin reductase-like selenoprotein T (selenot).